We begin with the raw amino-acid sequence, 250 residues long: Global transcriptional regulator CodY (250 aa).

The segment at Met1–Leu147 is GAF domain. A DNA-binding region (H-T-H motif) is located at residues Ala195 to Arg214.

This sequence belongs to the CodY family.

The protein localises to the cytoplasm. Its function is as follows. DNA-binding global transcriptional regulator which is involved in the adaptive response to starvation and acts by directly or indirectly controlling the expression of numerous genes in response to nutrient availability. During rapid exponential growth, CodY is highly active and represses genes whose products allow adaptation to nutrient depletion. The polypeptide is Global transcriptional regulator CodY (Thermoanaerobacter sp. (strain X514)).